The sequence spans 217 residues: GRB2-related adapter protein (217 aa).

Positions 1–58 (MESVALYSFQATESDELAFNKGDTLKILNMEDDQNWYKAELRGAEGFVPKNYIRVKPH) constitute an SH3 1 domain. The region spanning 60–152 (WYSGRISRQL…RRQIFLCDEQ (93 aa)) is the SH2 domain. Positions 158–217 (SRACFAQAQFDFSAQDPSQLSLRRGDIVEVVEREDPHWWRGRAGGRLGFFPRSYVQPVHL) constitute an SH3 2 domain.

This sequence belongs to the GRB2/sem-5/DRK family. Associates through its SH2 domain with ligand-activated receptors for stem cell factor (KIT) and erythropoietin (EPOR). Also forms a stable complex with the Bcr-Abl oncoprotein. GRAP is associated with the Ras guanine nucleotide exchange factor SOS1, primarily through its N-terminal SH3 domain. Interacts with phosphorylated LAT upon TCR activation. Interacts with SHB. In terms of tissue distribution, expressed in inner ear, in neruonal fibers innervating cochlear and utricular auditory hair cells (at protein level).

Its subcellular location is the membrane. The protein localises to the synapse. Functionally, couples signals from receptor and cytoplasmic tyrosine kinases to the Ras signaling pathway. Plays a role in the inner ear and in hearing. The sequence is that of GRB2-related adapter protein from Mus musculus (Mouse).